The following is a 216-amino-acid chain: Sugar transporter SWEET1 (216 aa).

The next 7 helical transmembrane spans lie at 3-23, 36-56, 65-85, 96-116, 125-145, 157-177, and 181-201; these read WMWL…SSGL, ENIQ…WFYY, LMIV…AYLL, QVLV…LWIL, LGLF…ADLA, SFPL…YGLV, and LYIT…FWLF. Positions 6 to 90 constitute a MtN3/slv 1 domain; sequence LLSGACIVFT…GAYLLYSPER (85 aa). Residues 124–206 enclose the MtN3/slv 2 domain; that stretch reads QLGLFCSVFT…RFWLFSQFPP (83 aa).

The protein belongs to the SWEET sugar transporter family.

The protein localises to the golgi apparatus membrane. It localises to the cell membrane. Mediates sugar transport across membranes. The polypeptide is Sugar transporter SWEET1 (slc50a1) (Xenopus laevis (African clawed frog)).